The sequence spans 210 residues: Glutathione S-transferase-like protein FUS3 (210 aa).

The region spanning 1–74 (MPNARVFKIL…YVAQSGPQAS (74 aa)) is the GST N-terminal domain. The GST C-terminal domain maps to 80-206 (DAMSSAKIRQ…GKPNFIEKRR (127 aa)).

This sequence belongs to the GST superfamily.

Glutathione S-transferase-like protein; part of the gene cluster that mediates the biosynthesis of the mycotoxin fusarin C. Within the cluster, FUS1, FUS2, FUS8 and FUS9 are sufficient for fusarin production. The other FUS cluster members are not essential for fusarin C biosynthesis. The protein is Glutathione S-transferase-like protein FUS3 of Gibberella fujikuroi (strain CBS 195.34 / IMI 58289 / NRRL A-6831) (Bakanae and foot rot disease fungus).